A 94-amino-acid polypeptide reads, in one-letter code: Probable Fe(2+)-trafficking protein (94 aa).

It belongs to the Fe(2+)-trafficking protein family.

Its function is as follows. Could be a mediator in iron transactions between iron acquisition and iron-requiring processes, such as synthesis and/or repair of Fe-S clusters in biosynthetic enzymes. In Marinomonas sp. (strain MWYL1), this protein is Probable Fe(2+)-trafficking protein.